The sequence spans 205 residues: ATP phosphoribosyltransferase (205 aa).

Belongs to the ATP phosphoribosyltransferase family. Short subfamily. Heteromultimer composed of HisG and HisZ subunits.

It localises to the cytoplasm. It carries out the reaction 1-(5-phospho-beta-D-ribosyl)-ATP + diphosphate = 5-phospho-alpha-D-ribose 1-diphosphate + ATP. It functions in the pathway amino-acid biosynthesis; L-histidine biosynthesis; L-histidine from 5-phospho-alpha-D-ribose 1-diphosphate: step 1/9. Functionally, catalyzes the condensation of ATP and 5-phosphoribose 1-diphosphate to form N'-(5'-phosphoribosyl)-ATP (PR-ATP). Has a crucial role in the pathway because the rate of histidine biosynthesis seems to be controlled primarily by regulation of HisG enzymatic activity. The sequence is that of ATP phosphoribosyltransferase from Helicobacter hepaticus (strain ATCC 51449 / 3B1).